A 74-amino-acid polypeptide reads, in one-letter code: Insertion element IS986 uncharacterized 8.2 kDa protein (74 aa).

The polypeptide is Insertion element IS986 uncharacterized 8.2 kDa protein (Mycobacterium tuberculosis).